The sequence spans 137 residues: Putative pre-16S rRNA nuclease (137 aa).

It belongs to the YqgF nuclease family.

Its subcellular location is the cytoplasm. Could be a nuclease involved in processing of the 5'-end of pre-16S rRNA. In Mycoplasmopsis synoviae (strain 53) (Mycoplasma synoviae), this protein is Putative pre-16S rRNA nuclease.